Consider the following 100-residue polypeptide: Small ribosomal subunit protein uS14 (100 aa).

The protein belongs to the universal ribosomal protein uS14 family. In terms of assembly, part of the 30S ribosomal subunit. Contacts proteins S3 and S10.

Binds 16S rRNA, required for the assembly of 30S particles and may also be responsible for determining the conformation of the 16S rRNA at the A site. The polypeptide is Small ribosomal subunit protein uS14 (Prochlorococcus marinus (strain MIT 9215)).